The sequence spans 162 residues: Large ribosomal subunit protein uL15 (162 aa).

The segment at 1–41 (MKLSDIADNAGSRKKRMRVGRGIGSGKGKTAGRGGKGQTAR) is disordered. Positions 21 to 37 (RGIGSGKGKTAGRGGKG) are enriched in gly residues.

Belongs to the universal ribosomal protein uL15 family. In terms of assembly, part of the 50S ribosomal subunit.

Its function is as follows. Binds to the 23S rRNA. This chain is Large ribosomal subunit protein uL15, found in Rhodopseudomonas palustris (strain BisB18).